Consider the following 370-residue polypeptide: Flagellar P-ring protein (370 aa).

The signal sequence occupies residues 1 to 24 (MTLSKWILSFGLSVCLIVSHPVSA).

The protein belongs to the FlgI family. In terms of assembly, the basal body constitutes a major portion of the flagellar organelle and consists of four rings (L,P,S, and M) mounted on a central rod.

It is found in the periplasm. The protein resides in the bacterial flagellum basal body. Its function is as follows. Assembles around the rod to form the L-ring and probably protects the motor/basal body from shearing forces during rotation. This is Flagellar P-ring protein from Nitrosomonas europaea (strain ATCC 19718 / CIP 103999 / KCTC 2705 / NBRC 14298).